We begin with the raw amino-acid sequence, 411 residues long: Putative acid phosphatase 10 (411 aa).

H33 acts as the Nucleophile in catalysis. The active-site Proton donor is the D313. C379 and C385 form a disulfide bridge.

This sequence belongs to the histidine acid phosphatase family.

The catalysed reaction is a phosphate monoester + H2O = an alcohol + phosphate. The polypeptide is Putative acid phosphatase 10 (pho-10) (Caenorhabditis elegans).